Here is a 403-residue protein sequence, read N- to C-terminus: Na(+)-translocating NADH-quinone reductase subunit B (403 aa).

9 consecutive transmembrane segments (helical) span residues 56-76, 121-141, 164-184, 225-245, 260-280, 287-307, 312-332, 348-368, and 371-391; these read MMIIVWLCTFPAMFFGMYNVG, AYFLPVYLTTFIVGGFWEVLF, LPPSVPLWQVALGISFGVVLG, GFAGATSLSLAAAGGVDNILG, GSMGETSTLAIFIGGAVLLLT, IVAGVMLGMVAMSYLFNAIGS, MFAMPWYWHLVTGGFAFGMIF, WLFGALIGVMVMLIRVVNPAF, and GMMLAILFANLFAPLIDHFVV. Thr-230 bears the FMN phosphoryl threonine mark.

The protein belongs to the NqrB/RnfD family. Composed of six subunits; NqrA, NqrB, NqrC, NqrD, NqrE and NqrF. The cofactor is FMN.

Its subcellular location is the cell inner membrane. It carries out the reaction a ubiquinone + n Na(+)(in) + NADH + H(+) = a ubiquinol + n Na(+)(out) + NAD(+). Functionally, NQR complex catalyzes the reduction of ubiquinone-1 to ubiquinol by two successive reactions, coupled with the transport of Na(+) ions from the cytoplasm to the periplasm. NqrA to NqrE are probably involved in the second step, the conversion of ubisemiquinone to ubiquinol. This chain is Na(+)-translocating NADH-quinone reductase subunit B, found in Pseudomonas aeruginosa (strain LESB58).